The chain runs to 424 residues: Histidine--tRNA ligase (424 aa).

It belongs to the class-II aminoacyl-tRNA synthetase family. Homodimer.

The protein resides in the cytoplasm. It catalyses the reaction tRNA(His) + L-histidine + ATP = L-histidyl-tRNA(His) + AMP + diphosphate + H(+). The chain is Histidine--tRNA ligase from Pediococcus pentosaceus (strain ATCC 25745 / CCUG 21536 / LMG 10740 / 183-1w).